A 308-amino-acid polypeptide reads, in one-letter code: Ornithine carbamoyltransferase (308 aa).

Carbamoyl phosphate is bound by residues 56-59, Q83, R107, and 134-137; these read STRT and HPCQ. L-ornithine-binding positions include N165, D225, and 229 to 230; that span reads SM. Carbamoyl phosphate is bound by residues 266–267 and R294; that span reads CL.

This sequence belongs to the aspartate/ornithine carbamoyltransferase superfamily. OTCase family.

The protein localises to the cytoplasm. It carries out the reaction carbamoyl phosphate + L-ornithine = L-citrulline + phosphate + H(+). It functions in the pathway amino-acid biosynthesis; L-arginine biosynthesis; L-arginine from L-ornithine and carbamoyl phosphate: step 1/3. Reversibly catalyzes the transfer of the carbamoyl group from carbamoyl phosphate (CP) to the N(epsilon) atom of ornithine (ORN) to produce L-citrulline. This Ruegeria pomeroyi (strain ATCC 700808 / DSM 15171 / DSS-3) (Silicibacter pomeroyi) protein is Ornithine carbamoyltransferase.